Consider the following 224-residue polypeptide: UPF0758 protein CJA_3522 (224 aa).

The 123-residue stretch at 102 to 224 (LLSSPHLVRD…LVSLAERGWL (123 aa)) folds into the MPN domain. Residues His173, His175, and Asp186 each contribute to the Zn(2+) site. The JAMM motif signature appears at 173–186 (HNHPSGLAEPSQAD).

This sequence belongs to the UPF0758 family.

The chain is UPF0758 protein CJA_3522 from Cellvibrio japonicus (strain Ueda107) (Pseudomonas fluorescens subsp. cellulosa).